A 160-amino-acid polypeptide reads, in one-letter code: Monooxygenase AacuO (160 aa).

This sequence belongs to the avfA family.

The protein operates within secondary metabolite biosynthesis. Its function is as follows. Monooxygenase; part of the gene cluster that mediates the biosynthesis of the tetrahydroxanthone dimer secalonic acid D. The pathway begins with the synthesis of atrochrysone thioester by the polyketide synthase AacuL. The atrochrysone carboxyl ACP thioesterase AacuM then breaks the thioester bond and releases the atrochrysone carboxylic acid from AacuL. Atrochrysone carboxylic acid is decarboxylated by the decarboxylase AacuI, and oxidized by the anthrone oxygenase AacuG to yield emodin. Emodin is then reduced to emodin hydroquinone by a yet unidentified oxidoreductase. A-ring reduction by the short chain dehydrogenase AacuN, dehydration by the scytalone dehydratase-like protein AacuK and probable spontaneous re-oxidation, results in overall deoxygenation to chrysophanol. Baeyer-Villiger oxidation by the Baeyer-Villiger monooxygenase (BVMO) AacuH then yields monodictyphenone. Monodictyphenone is transformed into compounds with the tetrahydroxanthone skeleton via methylesterification by the methyltransferase AacuQ, followed by the action of the flavin-dependent monooxygenase AacuC, the isomerase AacuP, and the short chain dehydrogenase/reductase AacuF or AacuD. AacuF and AacuD should accept the same compound as a substrate but perform the ketoreduction with a different stereoselectivity, thus yielding blennolides B and A, respectively. In the final step of the biosynthesis, the cytochrome P450 monooxygenase AacuE accepts blennolide B and/or blennolide A to conduct the dimerization reaction to furnish the tetrahydroxanthone dimers, secalonic acids D, B, and F. The protein is Monooxygenase AacuO of Aspergillus aculeatus (strain ATCC 16872 / CBS 172.66 / WB 5094).